The following is a 313-amino-acid chain: ADP-L-glycero-D-manno-heptose-6-epimerase (313 aa).

NADP(+)-binding positions include 10–11 (MI), 31–32 (DN), K38, K53, 75–79 (EGACS), and N92. The active-site Proton acceptor is the Y139. Residue K143 coordinates NADP(+). N174 provides a ligand contact to substrate. Positions 175 and 183 each coordinate NADP(+). Catalysis depends on K183, which acts as the Proton acceptor. Substrate is bound by residues S185, H192, 206–209 (FEGS), R214, and Y277.

It belongs to the NAD(P)-dependent epimerase/dehydratase family. HldD subfamily. In terms of assembly, homopentamer. NADP(+) is required as a cofactor.

The enzyme catalyses ADP-D-glycero-beta-D-manno-heptose = ADP-L-glycero-beta-D-manno-heptose. It participates in nucleotide-sugar biosynthesis; ADP-L-glycero-beta-D-manno-heptose biosynthesis; ADP-L-glycero-beta-D-manno-heptose from D-glycero-beta-D-manno-heptose 7-phosphate: step 4/4. Functionally, catalyzes the interconversion between ADP-D-glycero-beta-D-manno-heptose and ADP-L-glycero-beta-D-manno-heptose via an epimerization at carbon 6 of the heptose. The polypeptide is ADP-L-glycero-D-manno-heptose-6-epimerase (Aliivibrio fischeri (strain MJ11) (Vibrio fischeri)).